The primary structure comprises 798 residues: Integrin beta-1 (798 aa).

Residues 1-20 form the signal peptide; that stretch reads MNLQLIFWIGLISSICCVFG. At 21–728 the chain is on the extracellular side; it reads QADENRCLKA…ETPECPTGPD (708 aa). Residues 26 to 76 enclose the PSI domain; that stretch reads RCLKANAKSCGECIQAGPNCGWCVNSTFLQEGMPTSARCDDLEALKKKGCH. 28 disulfides stabilise this stretch: Cys-27–Cys-45, Cys-35–Cys-464, Cys-38–Cys-64, Cys-48–Cys-75, Cys-207–Cys-213, Cys-261–Cys-301, Cys-401–Cys-415, Cys-435–Cys-462, Cys-466–Cys-486, Cys-477–Cys-489, Cys-491–Cys-500, Cys-502–Cys-533, Cys-516–Cys-531, Cys-525–Cys-536, Cys-538–Cys-553, Cys-555–Cys-576, Cys-560–Cys-574, Cys-568–Cys-579, Cys-581–Cys-590, Cys-592–Cys-615, Cys-599–Cys-613, Cys-607–Cys-618, Cys-620–Cys-630, Cys-633–Cys-636, Cys-640–Cys-691, Cys-646–Cys-665, Cys-649–Cys-661, and Cys-699–Cys-723. N-linked (GlcNAc...) asparagine glycosylation is present at Asn-50. Positions 75–91 are enriched in basic and acidic residues; the sequence is CHPDDIENPRGSKDVKK. Residues 75–107 are disordered; the sequence is CHPDDIENPRGSKDVKKNKNVTNRSKGTAEKLQ. N-linked (GlcNAc...) asparagine glycosylation is found at Asn-94 and Asn-97. The VWFA domain occupies 140–378; that stretch reads DYPIDLYYLM…QLIIDAYNSL (239 aa). Positions 152 and 154 each coordinate Mg(2+). Ser-154, Asp-157, Asp-158, and Glu-189 together coordinate Ca(2+). A CX3CL1-binding region spans residues 207-213; the sequence is CTSEQNC. Asn-212 carries an N-linked (GlcNAc...) asparagine glycan. Ca(2+) contacts are provided by Asn-244, Asp-246, Pro-248, and Glu-249. Glu-249 contacts Mg(2+). N-linked (GlcNAc...) asparagine glycosylation occurs at Asn-269. Positions 295-314 are CX3CL1-binding; sequence LPNDGQCHLENDVYTMSHYY. Position 362 (Ala-362) interacts with Ca(2+). N-linked (GlcNAc...) asparagine glycans are attached at residues Asn-363, Asn-406, and Asn-417. The interval 383 to 465 is interaction with TMEM182; the sequence is ILENSKLPEG…IILQFICECE (83 aa). I-EGF domains are found at residues 466–501, 502–554, 555–591, and 592–631; these read CQNE…RHCE, CSTD…KFCE, CDNF…SACD, and CSLD…PTCE. N-linked (GlcNAc...) asparagine glycosylation occurs at Asn-481. Asn-520 carries N-linked (GlcNAc...) asparagine glycosylation. Asn-584 carries an N-linked (GlcNAc...) asparagine glycan. Asn-669 is a glycosylation site (N-linked (GlcNAc...) asparagine). Residues 729-751 form a helical membrane-spanning segment; that stretch reads IIPIVAGVVAGIVLIGLALLLIW. Topologically, residues 752 to 798 are cytoplasmic; that stretch reads KLLMIIHDTREFAKFEKEKMNAKWDTGENPIYKSAVTTVVNPKYEGK. The interval 762-767 is signal for sorting from recycling endosomes; interaction with ACAP1; the sequence is EFAKFE. The residue at position 777 (Thr-777) is a Phosphothreonine. Residue Tyr-783 is modified to Phosphotyrosine. The residue at position 785 (Ser-785) is a Phosphoserine. Positions 785 to 792 are interaction with ITGB1BP1; it reads SAVTTVVN. Thr-789 is subject to Phosphothreonine. Lys-794 is modified (N6-acetyllysine; alternate). A Glycyl lysine isopeptide (Lys-Gly) (interchain with G-Cter in SUMO1); alternate cross-link involves residue Lys-794.

This sequence belongs to the integrin beta chain family. As to quaternary structure, interacts with seprase FAP (seprase); the interaction occurs at the cell surface of invadopodia membrane in a collagen-dependent manner. Heterodimer of an alpha and a beta subunit. Beta-1 associates with either alpha-1, alpha-2, alpha-3, alpha-4, alpha-5, alpha-6, alpha-7, alpha-8, alpha-9, alpha-10, alpha-11 or alpha-V. ITGA6:ITGB1 is found in a complex with CD9; interaction takes place in oocytes and is involved in sperm-egg fusion. Binds LGALS3BP and NMRK2, when associated with alpha-7, but not with alpha-5. Interacts with FLNA, FLNB, FLNC and RANBP9. Interacts with KRT1 in the presence of RACK1 and SRC. Interacts with JAML; integrin alpha-4/beta-1 may regulate leukocyte to endothelial cells adhesion by controlling JAML homodimerization. Interacts with RAB21. Interacts (via the cytoplasmic region) with RAB25 (via the hypervariable C-terminal region). Interacts with MYO10. Interacts with ITGB1BP1 (via C-terminal region); the interaction is a prerequisite for focal adhesion disassembly. Interacts with TLN1; the interaction is prevented by competitive binding of ITGB1BP1. Interacts with ACAP1; required for ITGB1 recycling. Interacts with ASAP3. Interacts with FERMT2; the interaction is inhibited in presence of ITGB1BP1. Interacts with DAB2. Interacts with FGR and HCK. Interacts with alpha-7A and alpha-7B in adult skeletal muscle. Interacts with alpha-7B in cardiomyocytes of adult heart. Interacts with EMP2; the interaction may be direct or indirect and ITGB1 has a heterodimer form. ITGA5:ITGB1 interacts with CCN3. ITGA4:ITGB1 is found in a ternary complex with CX3CR1 and CX3CL1. ITGA5:ITGB1 interacts with FBN1. ITGA5:ITGB1 acts as a receptor for fibronectin FN1 and mediates R-G-D-dependent cell adhesion to FN1. ITGA5:ITGB1 interacts with IL1B. Interacts with MDK. ITGA4:ITGB1 interacts with MDK; this interaction mediates MDK-induced osteoblast cells migration through PXN phosphorylation. ITGA6:ITGB1 interacts with MDK; this interaction mediates MDK-induced neurite-outgrowth. ITGA5:ITGB1 interacts with ACE2. Interacts with TMEM182 and LAMB1. Interacts with tensin TNS3; TNS3 also interacts with PEAK1, thus acting as an adapter molecule to bridge the association of PEAK1 with ITGB1. Interacts with tensin TNS4; the interaction displaces tensin TNS3 from the ITGB1 cytoplasmic tail and promotes ITGB1 stability. Integrin ITGA9:ITGB1 interacts with SPP1/OPN (via N-terminus). Integrin ITGA9:ITGB1 interacts with TNC/TNFN3 (via the 3rd Fibronectin type-III domain). Integrins ITGA4:ITGB1 and ITGA9:ITGB1 interact with SVEP1 (via Sushi domain 21); thereby inhibit Ca(2+) intracellular signaling and as a result repress vasocontraction. ITGA4:ITGB1 and ITGA5:ITGB1 interacts with SELP. Interacts with CD248. ITGA5:ITGB1 interacts with IGFBP1. ITGA4:ITGB1 interacts with BCAM. Interacts with ADGRG6.

Its subcellular location is the cell membrane. The protein localises to the cell projection. It is found in the invadopodium membrane. The protein resides in the ruffle membrane. It localises to the recycling endosome. Its subcellular location is the melanosome. The protein localises to the lamellipodium. It is found in the ruffle. The protein resides in the cell junction. It localises to the focal adhesion. Functionally, integrins alpha-1/beta-1, alpha-2/beta-1, alpha-10/beta-1 and alpha-11/beta-1 are receptors for collagen. Integrins alpha-1/beta-1 and alpha-2/beta-2 recognize the proline-hydroxylated sequence G-F-P-G-E-R in collagen. Integrins alpha-2/beta-1, alpha-3/beta-1, alpha-4/beta-1, alpha-5/beta-1, alpha-8/beta-1, alpha-10/beta-1, alpha-11/beta-1 and alpha-V/beta-1 are receptors for fibronectin. Alpha-4/beta-1 recognizes one or more domains within the alternatively spliced CS-1 and CS-5 regions of fibronectin. Integrin alpha-5/beta-1 is a receptor for fibrinogen. Integrin alpha-1/beta-1, alpha-2/beta-1, alpha-6/beta-1 and alpha-7/beta-1 are receptors for lamimin. Integrin alpha-6/beta-1 (ITGA6:ITGB1) is present in oocytes and is involved in sperm-egg fusion. Integrin alpha-4/beta-1 is a receptor for VCAM1 and recognizes the sequence Q-I-D-S in VCAM1. Integrin alpha-9/beta-1 is a receptor for VCAM1, cytotactin and osteopontin. It recognizes the sequence A-E-I-D-G-I-E-L in cytotactin. Integrin alpha-3/beta-1 is a receptor for epiligrin, thrombospondin and CSPG4. Integrin alpha-3/beta-1 provides a docking site for FAP (seprase) at invadopodia plasma membranes in a collagen-dependent manner and hence may participate in the adhesion, formation of invadopodia and matrix degradation processes, promoting cell invasion. Alpha-3/beta-1 may mediate with LGALS3 the stimulation by CSPG4 of endothelial cells migration. Integrin alpha-V/beta-1 is a receptor for vitronectin. Beta-1 integrins recognize the sequence R-G-D in a wide array of ligands. When associated with alpha-7/beta-1 integrin, regulates cell adhesion and laminin matrix deposition. Involved in promoting endothelial cell motility and angiogenesis. Involved in osteoblast compaction through the fibronectin fibrillogenesis cell-mediated matrix assembly process and the formation of mineralized bone nodules. May be involved in up-regulation of the activity of kinases such as PKC via binding to KRT1. Together with KRT1 and RACK1, serves as a platform for SRC activation or inactivation. Plays a mechanistic adhesive role during telophase, required for the successful completion of cytokinesis. ITGA4:ITGB1 binds to fractalkine (CX3CL1) and may act as its coreceptor in CX3CR1-dependent fractalkine signaling. ITGA4:ITGB1 and ITGA5:ITGB1 bind to PLA2G2A via a site (site 2) which is distinct from the classical ligand-binding site (site 1) and this induces integrin conformational changes and enhanced ligand binding to site 1. ITGA5:ITGB1 acts as a receptor for fibrillin-1 (FBN1) and mediates R-G-D-dependent cell adhesion to FBN1. ITGA5:ITGB1 is a receptor for IL1B and binding is essential for IL1B signaling. ITGA5:ITGB3 is a receptor for soluble CD40LG and is required for CD40/CD40LG signaling. Plays an important role in myoblast differentiation and fusion during skeletal myogenesis. ITGA9:ITGB1 may play a crucial role in SVEP1/polydom-mediated myoblast cell adhesion. Integrins ITGA9:ITGB1 and ITGA4:ITGB1 repress PRKCA-mediated L-type voltage-gated channel Ca(2+) influx and ROCK-mediated calcium sensitivity in vascular smooth muscle cells via their interaction with SVEP1, thereby inhibit vasocontraction. The polypeptide is Integrin beta-1 (ITGB1) (Felis catus (Cat)).